Here is a 120-residue protein sequence, read N- to C-terminus: Small ribosomal subunit protein bS6 (120 aa).

Residues 93–120 form a disordered region; that stretch reads KKADTAPSSMMKTVEREEARKASQTEQA. Residues 105–120 show a composition bias toward basic and acidic residues; the sequence is TVEREEARKASQTEQA.

This sequence belongs to the bacterial ribosomal protein bS6 family.

In terms of biological role, binds together with bS18 to 16S ribosomal RNA. This is Small ribosomal subunit protein bS6 from Delftia acidovorans (strain DSM 14801 / SPH-1).